The sequence spans 294 residues: Ribosomal RNA small subunit methyltransferase A (294 aa).

Residues asparagine 31, leucine 33, glycine 58, glutamate 79, aspartate 111, and asparagine 136 each contribute to the S-adenosyl-L-methionine site.

Belongs to the class I-like SAM-binding methyltransferase superfamily. rRNA adenine N(6)-methyltransferase family. RsmA subfamily.

Its subcellular location is the cytoplasm. The catalysed reaction is adenosine(1518)/adenosine(1519) in 16S rRNA + 4 S-adenosyl-L-methionine = N(6)-dimethyladenosine(1518)/N(6)-dimethyladenosine(1519) in 16S rRNA + 4 S-adenosyl-L-homocysteine + 4 H(+). Its function is as follows. Specifically dimethylates two adjacent adenosines (A1518 and A1519) in the loop of a conserved hairpin near the 3'-end of 16S rRNA in the 30S particle. May play a critical role in biogenesis of 30S subunits. This Lactobacillus acidophilus (strain ATCC 700396 / NCK56 / N2 / NCFM) protein is Ribosomal RNA small subunit methyltransferase A.